The primary structure comprises 217 residues: Resolvase homolog YneB (217 aa).

Positions 2–147 (KALIYARVST…RGMKRAVKNG (146 aa)) constitute a Resolvase/invertase-type recombinase catalytic domain. The active-site O-(5'-phospho-DNA)-serine intermediate is the Ser10.

This sequence belongs to the site-specific recombinase resolvase family.

In Bacillus subtilis (strain 168), this protein is Resolvase homolog YneB (yneB).